A 226-amino-acid chain; its full sequence is MEQKICVIGFSGGQDSTTLAVWAKKRFKKVCLVGFDYAQKHSVELECAQKIASLLQLPYEIIPLDFLENITRSALFKNSNDLIGHSHAQNKDLPNSFVPNRNAIFITLLHSYAQKLGASNIALGVSQADFSGYPDCKEDFIKSIEHALNLGSNTAIKILTPLMFLNKAQEFQMAKDLGVLDLVIKETHTCYQGERKILHAYGYGCDKCPACQLRKKGFEEFQANKK.

Residue 10–20 participates in ATP binding; it reads FSGGQDSTTLA. Cys-190, Cys-205, Cys-208, and Cys-211 together coordinate Zn(2+).

It belongs to the QueC family. Requires Zn(2+) as cofactor.

The enzyme catalyses 7-carboxy-7-deazaguanine + NH4(+) + ATP = 7-cyano-7-deazaguanine + ADP + phosphate + H2O + H(+). The protein operates within purine metabolism; 7-cyano-7-deazaguanine biosynthesis. In terms of biological role, catalyzes the ATP-dependent conversion of 7-carboxy-7-deazaguanine (CDG) to 7-cyano-7-deazaguanine (preQ(0)). The chain is 7-cyano-7-deazaguanine synthase from Helicobacter pylori (strain ATCC 700392 / 26695) (Campylobacter pylori).